Here is a 427-residue protein sequence, read N- to C-terminus: Serine hydroxymethyltransferase (427 aa).

120–122 (GHI) is a (6S)-5,6,7,8-tetrahydrofolate binding site. Lysine 226 bears the N6-(pyridoxal phosphate)lysine mark. Glutamate 243 provides a ligand contact to (6S)-5,6,7,8-tetrahydrofolate.

It belongs to the SHMT family. As to quaternary structure, homodimer. It depends on pyridoxal 5'-phosphate as a cofactor.

The protein localises to the cytoplasm. It functions in the pathway amino-acid biosynthesis; glycine biosynthesis; glycine from L-serine: step 1/1. In terms of biological role, catalyzes the reversible interconversion of serine and glycine with a modified folate serving as the one-carbon carrier. Also exhibits a pteridine-independent aldolase activity toward beta-hydroxyamino acids, producing glycine and aldehydes, via a retro-aldol mechanism. This is Serine hydroxymethyltransferase from Thermococcus gammatolerans (strain DSM 15229 / JCM 11827 / EJ3).